The primary structure comprises 196 residues: Glycerol-3-phosphate acyltransferase 2 (196 aa).

Helical transmembrane passes span 2 to 22 (GWWL…SYLI), 52 to 72 (VGGI…FITI), 80 to 100 (IVSL…FMKF), 112 to 132 (IIFC…LVIV), and 137 to 156 (YASL…GYLL).

It belongs to the PlsY family. In terms of assembly, probably interacts with PlsX.

It is found in the cell inner membrane. The enzyme catalyses an acyl phosphate + sn-glycerol 3-phosphate = a 1-acyl-sn-glycero-3-phosphate + phosphate. It participates in lipid metabolism; phospholipid metabolism. Functionally, catalyzes the transfer of an acyl group from acyl-phosphate (acyl-PO(4)) to glycerol-3-phosphate (G3P) to form lysophosphatidic acid (LPA). This enzyme utilizes acyl-phosphate as fatty acyl donor, but not acyl-CoA or acyl-ACP. This is Glycerol-3-phosphate acyltransferase 2 from Thermotoga maritima (strain ATCC 43589 / DSM 3109 / JCM 10099 / NBRC 100826 / MSB8).